A 430-amino-acid chain; its full sequence is Tol-Pal system protein TolB (430 aa).

Positions M1–A21 are cleaved as a signal peptide.

This sequence belongs to the TolB family. The Tol-Pal system is composed of five core proteins: the inner membrane proteins TolA, TolQ and TolR, the periplasmic protein TolB and the outer membrane protein Pal. They form a network linking the inner and outer membranes and the peptidoglycan layer.

The protein localises to the periplasm. In terms of biological role, part of the Tol-Pal system, which plays a role in outer membrane invagination during cell division and is important for maintaining outer membrane integrity. TolB occupies a key intermediary position in the Tol-Pal system because it communicates directly with both membrane-embedded components, Pal in the outer membrane and TolA in the inner membrane. The sequence is that of Tol-Pal system protein TolB from Escherichia coli O139:H28 (strain E24377A / ETEC).